The sequence spans 334 residues: Ketol-acid reductoisomerase (NADP(+)) (334 aa).

The 180-residue stretch at 2 to 181 (TKVYYDQSVE…GATRAGVIET (180 aa)) folds into the KARI N-terminal Rossmann domain. Residues 25 to 28 (YGSQ), R48, S52, and 82 to 85 (DEIQ) contribute to the NADP(+) site. H107 is an active-site residue. G133 contacts NADP(+). The region spanning 182 to 327 (TFKEETETDL…RELRKMMPFI (146 aa)) is the KARI C-terminal knotted domain. 4 residues coordinate Mg(2+): D190, E194, E226, and E230. S251 lines the substrate pocket.

Belongs to the ketol-acid reductoisomerase family. It depends on Mg(2+) as a cofactor.

The enzyme catalyses (2R)-2,3-dihydroxy-3-methylbutanoate + NADP(+) = (2S)-2-acetolactate + NADPH + H(+). It catalyses the reaction (2R,3R)-2,3-dihydroxy-3-methylpentanoate + NADP(+) = (S)-2-ethyl-2-hydroxy-3-oxobutanoate + NADPH + H(+). Its pathway is amino-acid biosynthesis; L-isoleucine biosynthesis; L-isoleucine from 2-oxobutanoate: step 2/4. It functions in the pathway amino-acid biosynthesis; L-valine biosynthesis; L-valine from pyruvate: step 2/4. Functionally, involved in the biosynthesis of branched-chain amino acids (BCAA). Catalyzes an alkyl-migration followed by a ketol-acid reduction of (S)-2-acetolactate (S2AL) to yield (R)-2,3-dihydroxy-isovalerate. In the isomerase reaction, S2AL is rearranged via a Mg-dependent methyl migration to produce 3-hydroxy-3-methyl-2-ketobutyrate (HMKB). In the reductase reaction, this 2-ketoacid undergoes a metal-dependent reduction by NADPH to yield (R)-2,3-dihydroxy-isovalerate. This chain is Ketol-acid reductoisomerase (NADP(+)), found in Staphylococcus haemolyticus (strain JCSC1435).